The sequence spans 168 residues: SsrA-binding protein (168 aa).

Residues 1 to 20 (MAAQSKQAKPSGKQGGKKII) form a disordered region.

Belongs to the SmpB family.

The protein resides in the cytoplasm. Required for rescue of stalled ribosomes mediated by trans-translation. Binds to transfer-messenger RNA (tmRNA), required for stable association of tmRNA with ribosomes. tmRNA and SmpB together mimic tRNA shape, replacing the anticodon stem-loop with SmpB. tmRNA is encoded by the ssrA gene; the 2 termini fold to resemble tRNA(Ala) and it encodes a 'tag peptide', a short internal open reading frame. During trans-translation Ala-aminoacylated tmRNA acts like a tRNA, entering the A-site of stalled ribosomes, displacing the stalled mRNA. The ribosome then switches to translate the ORF on the tmRNA; the nascent peptide is terminated with the 'tag peptide' encoded by the tmRNA and targeted for degradation. The ribosome is freed to recommence translation, which seems to be the essential function of trans-translation. The polypeptide is SsrA-binding protein (Mycobacterium ulcerans (strain Agy99)).